Here is an 84-residue protein sequence, read N- to C-terminus: RNA-binding protein Hfq (84 aa).

The 60-residue stretch at 9 to 68 (DPYLNTLRKERVPVSIYLVNGIKLQGQIESFDQFVILLKNTVSQMVYKHAISTVVPSRPV) folds into the Sm domain.

Belongs to the Hfq family. As to quaternary structure, homohexamer.

RNA chaperone that binds small regulatory RNA (sRNAs) and mRNAs to facilitate mRNA translational regulation in response to envelope stress, environmental stress and changes in metabolite concentrations. Also binds with high specificity to tRNAs. This is RNA-binding protein Hfq from Azotobacter vinelandii (strain DJ / ATCC BAA-1303).